The sequence spans 1481 residues: Structural protein ORF147 (1481 aa).

Disordered stretches follow at residues 65 to 88 and 1319 to 1403; these read AEKR…ENLE and DEKL…PPIP. 3 stretches are compositionally biased toward low complexity: residues 73–84, 1323–1336, and 1393–1403; these read KGSQKKSNSSSS, SSTV…SPKT, and SSRTTITPPIP.

It is found in the virion. The sequence is that of Structural protein ORF147 from Noctuidae (owlet moths).